The chain runs to 362 residues: Adenosine deaminase (362 aa).

Zn(2+) contacts are provided by His-19 and His-21. His-21, Asp-23, and Gly-181 together coordinate substrate. His-208 lines the Zn(2+) pocket. Glu-211 functions as the Proton donor in the catalytic mechanism. A Zn(2+)-binding site is contributed by Asp-300.

This sequence belongs to the metallo-dependent hydrolases superfamily. Adenosine and AMP deaminases family. Adenosine deaminase subfamily. Zn(2+) is required as a cofactor.

The catalysed reaction is adenosine + H2O + H(+) = inosine + NH4(+). It carries out the reaction 2'-deoxyadenosine + H2O + H(+) = 2'-deoxyinosine + NH4(+). Its function is as follows. Catalyzes the hydrolytic deamination of adenosine and 2-deoxyadenosine. In Mycolicibacterium vanbaalenii (strain DSM 7251 / JCM 13017 / BCRC 16820 / KCTC 9966 / NRRL B-24157 / PYR-1) (Mycobacterium vanbaalenii), this protein is Adenosine deaminase.